Here is a 541-residue protein sequence, read N- to C-terminus: Coiled-coil domain-containing protein 116 (541 aa).

Residues 79 to 102 (QVLDSLQTVVEQATERLAAMKTEA) are a coiled coil. The segment at 346–397 (LPGNSDLLQPSSKASIPTNREARGEPCDSLTTAYSPKTSHRKSKGRRGSPPN) is disordered. Polar residues predominate over residues 351 to 363 (DLLQPSSKASIPT). Residues 383-392 (TSHRKSKGRR) show a composition bias toward basic residues. A Phosphoserine modification is found at Ser-394.

Its subcellular location is the cytoplasm. The protein resides in the cytoskeleton. It localises to the microtubule organizing center. It is found in the centrosome. In Mus musculus (Mouse), this protein is Coiled-coil domain-containing protein 116 (Ccdc116).